Consider the following 79-residue polypeptide: Conotoxin VnMKLT1-01122 (79 aa).

Residues 1–22 (MKLTCMKIVAVLFLTAWTFVTA) form the signal peptide. Positions 23–48 (DDSRNGLEYLFPKAHYEMNPEASKLN) are excised as a propeptide. Gln-51 carries the pyrrolidone carboxylic acid modification. Intrachain disulfides connect Cys-53-Cys-70, Cys-60-Cys-74, and Cys-69-Cys-78.

The protein belongs to the conotoxin O1 superfamily. As to expression, expressed by the venom duct.

Its subcellular location is the secreted. This Conus ventricosus (Mediterranean cone) protein is Conotoxin VnMKLT1-01122.